The sequence spans 75 residues: Small ribosomal subunit protein bS21 (75 aa).

This sequence belongs to the bacterial ribosomal protein bS21 family.

In Brucella abortus (strain S19), this protein is Small ribosomal subunit protein bS21.